The following is a 351-amino-acid chain: C-X-C chemokine receptor type 1 (351 aa).

At 1–44 (MAEAEYFIWTNPEGDFEKEFGNITGMLPTGDYFIPCKRVPITNR) the chain is on the extracellular side. A glycan (N-linked (GlcNAc...) asparagine) is linked at Asn-22. Residues 45–71 (QALVVFYALVSLLSLLGNSLVMLVILY) traverse the membrane as a helical segment. Over 72 to 80 (RRRTRSVMD) the chain is Cytoplasmic. The chain crosses the membrane as a helical span at residues 81 to 101 (VYVLNLAIADLLFSLTLPFLA). Over 102–116 (VSKLKGWIFGTPLCK) the chain is Extracellular. The cysteines at positions 115 and 192 are disulfide-linked. A helical transmembrane segment spans residues 117–138 (MVSLLKEFNFFSGILLLACISV). The Cytoplasmic portion of the chain corresponds to 139 to 159 (DRYLAIVHATRTLARKRYLVK). The helical transmembrane segment at 160–179 (FVCVGIWGLSLILSLPFAIF) threads the bilayer. At 180-204 (RQAYKPFRSGTVCYEVLGEATTDFR) the chain is on the extracellular side. The helical transmembrane segment at 205–225 (MTLRGLSHIFGFLLPLLTMLV) threads the bilayer. Residues 226–247 (CYGLTLRMLFKTHMRQKHRAMG) are Cytoplasmic-facing. Residues 248–269 (VIFAVVLVFLLCCLPYNLVLLS) form a helical membrane-spanning segment. Topologically, residues 270–290 (DTLLGAHLIEDTCERRNDIDQ) are extracellular. The chain crosses the membrane as a helical span at residues 291-313 (ALYITEILGFSHSCLNPIIYAFV). The Cytoplasmic segment spans residues 314–351 (GQNFRHEFLKILANHGLVRKEVLTHRRVAFHTSLTAIY).

The protein belongs to the G-protein coupled receptor 1 family. In terms of assembly, interacts with IL8. Interacts with GNAI2.

It localises to the cell membrane. In terms of biological role, receptor to interleukin-8, which is a powerful neutrophils chemotactic factor. Binding of IL-8 to the receptor causes activation of neutrophils. This response is mediated via a G-protein that activates a phosphatidylinositol-calcium second messenger system. The chain is C-X-C chemokine receptor type 1 (Cxcr1) from Mus musculus (Mouse).